The primary structure comprises 493 residues: Sodium-coupled neutral amino acid symporter 2 (493 aa).

At 1 to 72 (MNNAEVLNVA…LPGTTSFGMS (72 aa)) the chain is on the cytoplasmic side. The tract at residues 1–92 (MNNAEVLNVA…SGILGLSYAM (92 aa)) is regulates protein turnover upon amino acid deprivation. A helical membrane pass occupies residues 73-92 (VFNLSNAIVGSGILGLSYAM). Asn-78 lines the Na(+) pocket. The Extracellular portion of the chain corresponds to 93-98 (ANTGIA). A helical transmembrane segment spans residues 99 to 119 (LFMILLVFVTVFSLYSIHLLL). Topologically, residues 120–154 (KTANEGGSLLYEQLGLKAFGIPGKLAASGSVTLQN) are cytoplasmic. The chain crosses the membrane as a helical span at residues 155–173 (IGAMSSYLYIVKYELPLVI). Residues 174-184 (KALMDIKESNG) lie on the Extracellular side of the membrane. A helical membrane pass occupies residues 185–205 (EWYLNGDYLVIMVSLAIILPL). At 206-213 (SLLRNLGY) the chain is on the cytoplasmic side. A helical transmembrane segment spans residues 214–234 (LGYTSGFSPLCMVFFLIVVIY). Topologically, residues 235–279 (KKFEIPCPLEAMNMTSNSSSHDHMAHNETDDEMCKPKYFVFNSQT) are extracellular. The cysteines at positions 241 and 268 are disulfide-linked. Asn-247, Asn-251, and Asn-261 each carry an N-linked (GlcNAc...) asparagine glycan. The helical transmembrane segment at 280-300 (VYAVPILTFSFVCHPAVLPIY) threads the bilayer. The Cytoplasmic segment spans residues 301–316 (QELKGRSRRRMMNVSN). The helical transmembrane segment at 317 to 337 (VSFFAMFIMYLLAALFGYLTF) threads the bilayer. The Extracellular segment spans residues 338–358 (YSKVEPELLHTYSKVFGAGVI). Residues 359-379 (FVVVRLAVLMAVTLTVPIVIF) traverse the membrane as a helical segment. Residue Thr-373 coordinates Na(+). The Cytoplasmic segment spans residues 380-400 (PIRSSLNELFCSGKDFAWIRH). The helical transmembrane segment at 401 to 421 (ILITFLILAFTNVLVIFVPTI) threads the bilayer. Residues 422 to 423 (RD) lie on the Extracellular side of the membrane. Residues 424 to 444 (IFGFIGASAAAMLVFILPSAF) form a helical membrane-spanning segment. Residues 445 to 459 (YIRLVKKESMKSVQK) are Cytoplasmic-facing. Residues 460 to 482 (IGALLFLIGGIIVMIGSMTLIIL) traverse the membrane as a helical segment. At 483–493 (DWIHNSTSGGN) the chain is on the extracellular side.

It belongs to the amino acid/polyamine transporter 2 family.

It is found in the cell membrane. The catalysed reaction is L-alanine(in) + Na(+)(in) = L-alanine(out) + Na(+)(out). It carries out the reaction glycine(in) + Na(+)(in) = glycine(out) + Na(+)(out). It catalyses the reaction L-serine(in) + Na(+)(in) = L-serine(out) + Na(+)(out). The enzyme catalyses L-proline(in) + Na(+)(in) = L-proline(out) + Na(+)(out). The catalysed reaction is L-methionine(in) + Na(+)(in) = L-methionine(out) + Na(+)(out). It carries out the reaction L-histidine(in) + Na(+)(in) = L-histidine(out) + Na(+)(out). It catalyses the reaction L-asparagine(in) + Na(+)(in) = L-asparagine(out) + Na(+)(out). The enzyme catalyses L-glutamine(in) + Na(+)(in) = L-glutamine(out) + Na(+)(out). The catalysed reaction is L-threonine(in) + Na(+)(in) = L-threonine(out) + Na(+)(out). It carries out the reaction L-leucine(in) + Na(+)(in) = L-leucine(out) + Na(+)(out). It catalyses the reaction L-phenylalanine(in) + Na(+)(in) = L-phenylalanine(out) + Na(+)(out). Inhibited by N-methyl-D-glucamine. Inhibited by choline. Allosteric regulation of sodium ions binding by pH. Symporter that cotransports neutral amino acids and sodium ions from the extracellular to the intracellular side of the cell membrane. The transport is pH-sensitive, Li(+)-intolerant, electrogenic, driven by the Na(+) electrochemical gradient and cotransports of neutral amino acids and sodium ions with a stoichiometry of 1:1. The chain is Sodium-coupled neutral amino acid symporter 2 from Xenopus tropicalis (Western clawed frog).